The chain runs to 420 residues: MSSCSRTRTKAPRSARSRRNGGFSSSSATIVADIDDVLIQILSFLPIKTLLRFKRVSKRWLSLITNPVFSNRVIKSNHPLPISGFFLHSPREIKYSFVSLDDDATNQRISSSLPLWFTDHQTDMIIMQSTNGLLLCKCSCASSNHFNTNYYVYNPTTKQYTLLHQIAGHIALSLAFDPSRSPHYKVFCLRGRSNNSFSSASDSELYHIEVYSSNEGLWRRVVPVPTSPSTFIEFSYSVFWNGAVNWYGFSSRDCLSFDINTQEIKILPLPDHEHEDEPLPDPRILMFLDESQGNLYYIEVNNQSSSNLRVYEMESNSSSWSVKYNVDLEPLAAAFPEMIRTEYYTDRRIYAFSVIGFVKEETDAASYILLHIPNQAVKYNFIDKTFKKLCDFKSLVNDAPEDHFYRFQRTFQFIKSLANV.

The segment at 1-25 (MSSCSRTRTKAPRSARSRRNGGFSS) is disordered. Positions 7-19 (TRTKAPRSARSRR) are enriched in basic residues. The region spanning 27-77 (SATIVADIDDVLIQILSFLPIKTLLRFKRVSKRWLSLITNPVFSNRVIKSN) is the F-box domain.

This chain is F-box protein At5g07610, found in Arabidopsis thaliana (Mouse-ear cress).